The following is a 326-amino-acid chain: Vitamin B12 import system permease protein BtuC (326 aa).

9 helical membrane-spanning segments follow: residues 15-35 (WLLCLSVLMLLALLLSLCAGE), 61-81 (LAVLLVGAALAISGAVMQALF), 88-108 (PGLLGVSNGAGVGLIAAVLLG), 112-132 (LPNWALGLCAIAGALIITLIL), 146-166 (LLAGVALGIICSALMTWAIYF), 184-204 (GGVDWRQSWLMLALIPVLLWI), 240-260 (GWMVGVSVALAGAIGFIGLVI), 274-294 (VLLPGCALAGASALLLADIVA), and 302-322 (ELPIGVVTATLGAPVFIWLLL).

Belongs to the binding-protein-dependent transport system permease family. FecCD subfamily. In terms of assembly, the complex is composed of two ATP-binding proteins (BtuD), two transmembrane proteins (BtuC) and a solute-binding protein (BtuF).

It localises to the cell inner membrane. Part of the ABC transporter complex BtuCDF involved in vitamin B12 import. Involved in the translocation of the substrate across the membrane. This Escherichia coli O7:K1 (strain IAI39 / ExPEC) protein is Vitamin B12 import system permease protein BtuC.